A 1363-amino-acid polypeptide reads, in one-letter code: Insulin-like peptide receptor (1363 aa).

Residues 1 to 29 (MRVVDKMAGLMWAALTLVIGLGLLVPSNG) form the signal peptide. N-linked (GlcNAc...) asparagine glycosylation is found at Asn51, Asn97, Asn137, Asn278, Asn483, Asn599, Asn617, Asn665, Asn666, Asn711, Asn732, Asn736, Asn743, Asn816, Asn885, and Asn898. Fibronectin type-III domains are found at residues 473 to 586 (SFSR…TDAD) and 590 to 680 (HPQD…CPKS). Fibronectin type-III domains lie at 712–804 (ETRA…LART) and 813–912 (IPGN…VEEE). The Extracellular segment spans residues 721–928 (ELPVTARPFY…QDPQQQVPVS (208 aa)). The tract at residues 739–759 (LPSTNRTVPPTPTPNPNPQLE) is disordered. Residues 929–949 (LMIGMGVGFSLLLILAVIFGI) form a helical membrane-spanning segment. The Cytoplasmic portion of the chain corresponds to 950–1363 (WYCTKKRFGD…NLRIPKSTLC (414 aa)). Residues 994–1283 (ITLIRELGQG…EIVEILSPEL (290 aa)) enclose the Protein kinase domain. ATP contacts are provided by residues 1000–1008 (LGQGSFGMV) and Lys1028. The segment at 1091–1117 (PEEDVGLSDSPASNEAKNSPFAENDND) is disordered. Asp1148 serves as the catalytic Proton acceptor. Tyr1174 bears the Phosphotyrosine; by autocatalysis mark. Positions 1316 to 1363 (DTETEMYPSGSEFSSTPSPPSETPYSHMNGSHPQNGSMNLRIPKSTLC) are disordered. A compositionally biased stretch (low complexity) spans 1322–1331 (YPSGSEFSST). Over residues 1343 to 1353 (MNGSHPQNGSM) the composition is skewed to polar residues.

The protein belongs to the protein kinase superfamily. Tyr protein kinase family. Insulin receptor subfamily. As to quaternary structure, probable tetramer of 2 alpha and 2 beta chains linked by disulfide bonds. The alpha chains contribute to the formation of the ligand-binding domain, while the beta chains carry the kinase domain. Mn(2+) serves as cofactor.

Its subcellular location is the membrane. The enzyme catalyses L-tyrosyl-[protein] + ATP = O-phospho-L-tyrosyl-[protein] + ADP + H(+). Functionally, this receptor binds to the insulin related peptide and has a tyrosine-protein kinase activity. The chain is Insulin-like peptide receptor from Branchiostoma lanceolatum (Common lancelet).